Here is a 306-residue protein sequence, read N- to C-terminus: Leucotoxin LukEv (306 aa).

The first 23 residues, 1–23, serve as a signal peptide directing secretion; it reads MLAATLSVGLIAPLASPIQESRA.

It belongs to the aerolysin family. In terms of assembly, toxicity requires sequential binding and synergistic association of a class S and a class F component which form heterooligomeric complexes. LukEv (class S) associates with LukDv (class F).

The protein localises to the secreted. Its function is as follows. Part of a bi-component leucotoxin that acts by forming pores in the membrane of the target cells. The activity of LukEv-LukDv to rabbit leukocytes is similar to that of the Panton-Valentine leucocidin (PVL). LukEv-LukDv is hemolytic to rabbit red blood cells although the activity is only 8% of gamma-hemolysin. This Staphylococcus aureus (strain NCTC 8325 / PS 47) protein is Leucotoxin LukEv (lukEv).